The sequence spans 154 residues: Transcriptional repressor NrdR (154 aa).

Residues Cys3–Cys34 fold into a zinc finger. Positions Pro49 to Glu139 constitute an ATP-cone domain.

Belongs to the NrdR family. Requires Zn(2+) as cofactor.

Its function is as follows. Negatively regulates transcription of bacterial ribonucleotide reductase nrd genes and operons by binding to NrdR-boxes. The chain is Transcriptional repressor NrdR from Pseudomonas syringae pv. tomato (strain ATCC BAA-871 / DC3000).